The primary structure comprises 578 residues: Zinc finger protein with KRAB and SCAN domains 8 (578 aa).

The interval 1-20 (MAEESRKPSAPSPPDQTPEE) is disordered. Ser12 carries the phosphoserine modification. Residue Lys26 forms a Glycyl lysine isopeptide (Lys-Gly) (interchain with G-Cter in SUMO2) linkage. Residues 51-133 (RLRFRQLCYQ…TLLEDLERQI (83 aa)) enclose the SCAN box domain. The segment at 158–205 (ASAPEPPNTQLQSEATQHKSPVPQESQERSMSTSQSPTRSQKGSSGDQ) is disordered. Polar residues predominate over residues 165-205 (NTQLQSEATQHKSPVPQESQERSMSTSQSPTRSQKGSSGDQ). Residues Lys176 and Lys199 each participate in a glycyl lysine isopeptide (Lys-Gly) (interchain with G-Cter in SUMO2) cross-link. Position 201 is a phosphoserine (Ser201). Residues 220–316 (EKIEDMAVSL…GRLERQRGNP (97 aa)) form the KRAB domain. Glycyl lysine isopeptide (Lys-Gly) (interchain with G-Cter in SUMO2) cross-links involve residues Lys221, Lys272, and Lys288. 2 C2H2-type zinc fingers span residues 322–344 (HKCDECGKSFAQSSGLVRHWRIH) and 350–372 (YQCNVCGKAFSYRSALLSHQDIH). Residues Lys374 and Lys376 each participate in a glycyl lysine isopeptide (Lys-Gly) (interchain with G-Cter in SUMO2) cross-link. 7 C2H2-type zinc fingers span residues 378 to 400 (YHCKECGKAFSQNTGLILHQRIH), 406 to 428 (YQCNQCGKAFSQSAGLILHQRIH), 434 to 456 (YECNECGKAFSHSSHLIGHQRIH), 462 to 484 (YECDECGKTFRRSSHLIGHQRSH), 490 to 512 (YKCNECGRAFSQKSGLIEHQRIH), 518 to 540 (YKCKECGKAFNGNTGLIQHLRIH), and 546 to 568 (YQCNECGKAFIQRSSLIRHQRIH). Residues Lys413 and Lys441 each participate in a glycyl lysine isopeptide (Lys-Gly) (interchain with G-Cter in SUMO2) cross-link. Lys502 participates in a covalent cross-link: Glycyl lysine isopeptide (Lys-Gly) (interchain with G-Cter in SUMO2). Lys572 is covalently cross-linked (Glycyl lysine isopeptide (Lys-Gly) (interchain with G-Cter in SUMO2)).

The protein belongs to the krueppel C2H2-type zinc-finger protein family.

It localises to the nucleus. Functionally, may be involved in transcriptional regulation. The polypeptide is Zinc finger protein with KRAB and SCAN domains 8 (ZKSCAN8) (Pan paniscus (Pygmy chimpanzee)).